The primary structure comprises 202 residues: B-cell CLL/lymphoma 7 protein family member B (202 aa).

The interval 53 to 202 is disordered; that stretch reads DSKEKEKSKS…PTVPQTASES (150 aa). Polar residues predominate over residues 90-99; the sequence is ENSNQSSVSD. Residues 107 to 123 show a composition bias toward low complexity; that stretch reads SSTNSSPSPQQSESLSP. Phosphoserine occurs at positions 114, 118, 120, 122, 127, 148, and 152.

The protein belongs to the BCL7 family. In terms of tissue distribution, ubiquitous.

Its function is as follows. Positive regulator of apoptosis. Plays a role in the Wnt signaling pathway, negatively regulating the expression of Wnt signaling components CTNNB1 and HMGA1. Involved in cell cycle progression, maintenance of the nuclear structure and stem cell differentiation. May play a role in lung tumor development or progression. In Homo sapiens (Human), this protein is B-cell CLL/lymphoma 7 protein family member B (BCL7B).